Consider the following 149-residue polypeptide: 17 kDa major membrane protein (149 aa).

A signal peptide spans 1 to 19 (MKKIIKLSLLSLSIAGLAS). Cys-20 carries the N-palmitoyl cysteine lipid modification. Residue Cys-20 is the site of S-diacylglycerol cysteine attachment.

The protein resides in the cell outer membrane. The protein is 17 kDa major membrane protein of Francisella tularensis subsp. holarctica (strain LVS).